The chain runs to 97 residues: Large ribosomal subunit protein uL23 (97 aa).

Belongs to the universal ribosomal protein uL23 family. As to quaternary structure, part of the 50S ribosomal subunit. Contacts protein L29, and trigger factor when it is bound to the ribosome.

In terms of biological role, one of the early assembly proteins it binds 23S rRNA. One of the proteins that surrounds the polypeptide exit tunnel on the outside of the ribosome. Forms the main docking site for trigger factor binding to the ribosome. The chain is Large ribosomal subunit protein uL23 from Sulfurihydrogenibium sp. (strain YO3AOP1).